The primary structure comprises 394 residues: 1-deoxy-D-xylulose 5-phosphate reductoisomerase (394 aa).

NADPH is bound by residues Thr12, Gly13, Ser14, Ile15, Lys39, Gln40, and Asn126. Lys127 contacts 1-deoxy-D-xylulose 5-phosphate. Glu128 contacts NADPH. Asp152 is a Mn(2+) binding site. 1-deoxy-D-xylulose 5-phosphate contacts are provided by Ser153, Glu154, Ser183, and His206. Glu154 is a binding site for Mn(2+). Gly212 provides a ligand contact to NADPH. Positions 219, 224, 225, and 228 each coordinate 1-deoxy-D-xylulose 5-phosphate. Position 228 (Glu228) interacts with Mn(2+).

Belongs to the DXR family. It depends on Mg(2+) as a cofactor. Mn(2+) serves as cofactor.

The enzyme catalyses 2-C-methyl-D-erythritol 4-phosphate + NADP(+) = 1-deoxy-D-xylulose 5-phosphate + NADPH + H(+). The protein operates within isoprenoid biosynthesis; isopentenyl diphosphate biosynthesis via DXP pathway; isopentenyl diphosphate from 1-deoxy-D-xylulose 5-phosphate: step 1/6. Catalyzes the NADPH-dependent rearrangement and reduction of 1-deoxy-D-xylulose-5-phosphate (DXP) to 2-C-methyl-D-erythritol 4-phosphate (MEP). This chain is 1-deoxy-D-xylulose 5-phosphate reductoisomerase, found in Neisseria meningitidis serogroup A / serotype 4A (strain DSM 15465 / Z2491).